The sequence spans 367 residues: Developmentally-regulated GTP-binding protein 1 (367 aa).

The tract at residues 2-16 (SGTLARIAEIEAEMA) is required for interaction with STK16. In terms of domain architecture, OBG-type G spans 65–290 (ARIGFVGFPS…LLEKIWDYLQ (226 aa)). GTP contacts are provided by residues 71-78 (GFPSVGKS), 96-100 (FTTLT), 117-120 (DLPG), 248-251 (NKID), and 271-273 (SAH). Positions 78 and 98 each coordinate Mg(2+). Residues 290–366 (QLVRIYTKPK…EDEDVIQIVK (77 aa)) enclose the TGS domain.

This sequence belongs to the TRAFAC class OBG-HflX-like GTPase superfamily. OBG GTPase family. It depends on Mg(2+) as a cofactor. K(+) serves as cofactor. As to expression, expressed in many adult amd embryonic tissues. In adults, highest levels in ovaries and testes, followed by skeletal muscle, stomach, brain, kidney and liver. Weak expression in heart and brain.

The protein resides in the nucleus. It localises to the cytoplasm. The enzyme catalyses GTP + H2O = GDP + phosphate + H(+). Functionally, catalyzes the conversion of GTP to GDP through hydrolysis of the gamma-phosphate bond in GTP. Binds to microtubules and promotes microtubule polymerization and bundling. GTPase activity is not necessary for these microtubule-related functions. This Xenopus laevis (African clawed frog) protein is Developmentally-regulated GTP-binding protein 1 (drg1).